The primary structure comprises 904 residues: DNA mismatch repair protein MutS (904 aa).

654–661 (GPNMAGKS) contributes to the ATP binding site.

Belongs to the DNA mismatch repair MutS family.

Its function is as follows. This protein is involved in the repair of mismatches in DNA. It is possible that it carries out the mismatch recognition step. This protein has a weak ATPase activity. This chain is DNA mismatch repair protein MutS, found in Caulobacter sp. (strain K31).